We begin with the raw amino-acid sequence, 148 residues long: SsrA-binding protein (148 aa).

The tract at residues 123-148 is disordered; the sequence is KLHDKRETEKKRDWEREKARIMRSAT. Over residues 126-142 the composition is skewed to basic and acidic residues; that stretch reads DKRETEKKRDWEREKAR.

The protein belongs to the SmpB family.

It is found in the cytoplasm. Functionally, required for rescue of stalled ribosomes mediated by trans-translation. Binds to transfer-messenger RNA (tmRNA), required for stable association of tmRNA with ribosomes. tmRNA and SmpB together mimic tRNA shape, replacing the anticodon stem-loop with SmpB. tmRNA is encoded by the ssrA gene; the 2 termini fold to resemble tRNA(Ala) and it encodes a 'tag peptide', a short internal open reading frame. During trans-translation Ala-aminoacylated tmRNA acts like a tRNA, entering the A-site of stalled ribosomes, displacing the stalled mRNA. The ribosome then switches to translate the ORF on the tmRNA; the nascent peptide is terminated with the 'tag peptide' encoded by the tmRNA and targeted for degradation. The ribosome is freed to recommence translation, which seems to be the essential function of trans-translation. The sequence is that of SsrA-binding protein from Burkholderia pseudomallei (strain 1710b).